The primary structure comprises 27 residues: Metallothionein-like protein CAP5 (27 aa).

A compositionally biased stretch (low complexity) spans 1–18 (MAPCSCKSCGTSCAGSCT). Positions 1-27 (MAPCSCKSCGTSCAGSCTSCSCGSCSH) are disordered. Residues Cys-4, Cys-6, Cys-9, Cys-13, Cys-20, Cys-22, and Cys-25 each contribute to the Cu(+) site.

Belongs to the metallothionein superfamily. Type 8 family.

This Colletotrichum gloeosporioides (Anthracnose fungus) protein is Metallothionein-like protein CAP5 (CAP5).